The primary structure comprises 1007 residues: Protocadherin alpha-C2 (1007 aa).

Positions 1–42 (MEQAGTRPAATEHPRLRRPMPWLLLLPLLLLLLLLLPGPAAS) are cleaved as a signal peptide. Cadherin domains are found at residues 43 to 148 (QLRY…SPRF), 149 to 257 (PRPN…SPAF), 258 to 365 (DQST…APEV), 374 to 469 (VPEN…PPSF), and 470 to 579 (LEDS…APHI). Topologically, residues 43-708 (QLRYSVPEEQ…RTYSEITLYL (666 aa)) are extracellular. 2 N-linked (GlcNAc...) asparagine glycosylation sites follow: Asn280 and Asn436. Residues Asn586 and Asn657 are each glycosylated (N-linked (GlcNAc...) asparagine). In terms of domain architecture, Cadherin 6 spans 594 to 691 (VPRTAPAGYL…DRVSKILPDT (98 aa)). A helical transmembrane segment spans residues 709–729 (IIALSTVSFIFLLTIIILSII). Residues 730 to 1007 (KCYRYTAYGT…GNSTTDNSDQ (278 aa)) lie on the Cytoplasmic side of the membrane. 4 PXXP repeats span residues 856 to 859 (PRQP), 889 to 892 (PGGP), 930 to 933 (PGNP), and 948 to 951 (PGSP). Positions 856–951 (PRQPNPDWRY…PDKFIIPGSP (96 aa)) are 4 X 4 AA repeats of P-X-X-P. A disordered region spans residues 885 to 1007 (LRAGPGGPDQ…GNSTTDNSDQ (123 aa)). A compositionally biased stretch (basic and acidic residues) spans 966 to 980 (DKSDFITFGKKEETK).

The protein localises to the cell membrane. In terms of biological role, potential calcium-dependent cell-adhesion protein. May be involved in the establishment and maintenance of specific neuronal connections in the brain. The chain is Protocadherin alpha-C2 (PCDHAC2) from Homo sapiens (Human).